The chain runs to 342 residues: Autoinducer 2 import system permease protein LsrC (342 aa).

Over methionine 1–alanine 13 the chain is Periplasmic. The helical transmembrane segment at leucine 14 to valine 34 threads the bilayer. Topologically, residues glutamine 35–threonine 38 are cytoplasmic. The helical transmembrane segment at methionine 39 to leucine 59 threads the bilayer. Over threonine 60–serine 69 the chain is Periplasmic. Residues isoleucine 70–valine 90 form a helical membrane-spanning segment. Residues alanine 91–cysteine 92 lie on the Cytoplasmic side of the membrane. A helical membrane pass occupies residues valine 93 to leucine 113. Position 114 (lysine 114) is a topological domain, periplasmic. The chain crosses the membrane as a helical span at residues isoleucine 115–tryptophan 135. The Cytoplasmic portion of the chain corresponds to threonine 136 to proline 154. Residues leucine 155 to tryptophan 175 form a helical membrane-spanning segment. The Periplasmic segment spans residues leucine 176–serine 212. A helical transmembrane segment spans residues leucine 213–proline 233. The Cytoplasmic portion of the chain corresponds to asparagine 234 to glycine 251. The chain crosses the membrane as a helical span at residues glycine 252–leucine 272. The Periplasmic portion of the chain corresponds to threonine 273–arginine 283. The helical transmembrane segment at isoleucine 284–aspartate 304 threads the bilayer. At glycine 305–alanine 342 the chain is on the cytoplasmic side.

It belongs to the binding-protein-dependent transport system permease family. AraH/RbsC subfamily. As to quaternary structure, the complex is composed of two ATP-binding proteins (LsrA), two transmembrane proteins (LsrC and LsrD) and a solute-binding protein (LsrB).

The protein localises to the cell inner membrane. Part of the ABC transporter complex LsrABCD involved in autoinducer 2 (AI-2) import. Probably responsible for the translocation of the substrate across the membrane. The protein is Autoinducer 2 import system permease protein LsrC (lsrC) of Escherichia coli (strain SMS-3-5 / SECEC).